We begin with the raw amino-acid sequence, 78 residues long: MAKPPVRKPKKKVCVFCQEKMTYVDYKDTTLLRKFISDRGKIRARRVTGNCTQHQRDVAKAVKNAREMALLPYTSSAR.

This sequence belongs to the bacterial ribosomal protein bS18 family. Part of the 30S ribosomal subunit. Forms a tight heterodimer with protein bS6.

In terms of biological role, binds as a heterodimer with protein bS6 to the central domain of the 16S rRNA, where it helps stabilize the platform of the 30S subunit. The protein is Small ribosomal subunit protein bS18 of Thermobifida fusca (strain YX).